Reading from the N-terminus, the 468-residue chain is uncharacterized protein (468 aa).

The next 12 membrane-spanning stretches (helical) occupy residues 13–33, 40–60, 76–96, 112–132, 141–161, 194–214, 237–257, 260–280, 328–348, 354–374, 414–434, and 443–463; these read LEAFSPIIVMLLLLGLGYALF, LMIISTVFAGFLVFKLGHCYL, ALLILITVGLLIGTWISGGTI, LYVTALFLTAIVSICTGTSWG, FMGVAIGLDANLAATAGAVVA, LLYTTLPSFILSATVYVVYGL, VYHFNFLLLIPVAIVLWGSIT, PTIPVMLLSAFIAIINAILIQ, CFCALSFAGVLQLSGALTVII, FVHSTLSLIITTILCGLTMIG, IIEPILPWTAAGAYMAGTLGV, and AILCWSGIIFAIIYGASGIGI.

This sequence belongs to the NhaC Na(+)/H(+) (TC 2.A.35) antiporter family.

It localises to the cell membrane. This is an uncharacterized protein from Haemophilus influenzae (strain ATCC 51907 / DSM 11121 / KW20 / Rd).